Reading from the N-terminus, the 291-residue chain is Quinol oxidase subunit 2 (291 aa).

Positions 1 to 28 are cleaved as a signal peptide; the sequence is MQLKKAFWKLASLLPXSLLLFLGGCDKK. 2 consecutive transmembrane segments (helical) span residues 49–69 and 91–111; these read SFLL…VILI and LEII…IPTV.

The protein belongs to the cytochrome c oxidase subunit 2 family.

The protein resides in the cell membrane. It carries out the reaction 2 a quinol + O2 = 2 a quinone + 2 H2O. Its function is as follows. Catalyzes quinol oxidation with the concomitant reduction of oxygen to water. Subunit II transfers the electrons from a quinol to the binuclear center of the catalytic subunit I. This chain is Quinol oxidase subunit 2, found in Bacillus cereus (strain ATCC 10987 / NRS 248).